The primary structure comprises 212 residues: Dephospho-CoA kinase (212 aa).

Residues 3–207 (IIGLTGGIAS…RHLADDPEPG (205 aa)) form the DPCK domain. Residue 11–16 (ASGKST) participates in ATP binding.

Belongs to the CoaE family.

Its subcellular location is the cytoplasm. It catalyses the reaction 3'-dephospho-CoA + ATP = ADP + CoA + H(+). The protein operates within cofactor biosynthesis; coenzyme A biosynthesis; CoA from (R)-pantothenate: step 5/5. Functionally, catalyzes the phosphorylation of the 3'-hydroxyl group of dephosphocoenzyme A to form coenzyme A. The protein is Dephospho-CoA kinase of Moorella thermoacetica (strain ATCC 39073 / JCM 9320).